The primary structure comprises 326 residues: Protein spaetzle (326 aa).

Positions 1–25 (MMTPMWISLFKVLLLLFAFFATYEA) are cleaved as a signal peptide. Asparagine 48 is a glycosylation site (N-linked (GlcNAc...) asparagine). The tract at residues 56-82 (FMPIPTQHDDPTQKQKQNQNQSPIPET) is disordered. A compositionally biased stretch (polar residues) spans 69–80 (KQKQNQNQSPIP). N-linked (GlcNAc...) asparagine glycosylation is found at asparagine 114 and asparagine 164. Residues 152–174 (YRPPQSPARPLRNDTKEHNPCAK) are disordered. Over residues 162–174 (LRNDTKEHNPCAK) the composition is skewed to basic and acidic residues. Residues 228–322 (FLCRSIRKLV…FKIPSCCKCA (95 aa)) form the Spaetzle domain. Disulfide bonds link cysteine 230–cysteine 288, cysteine 267–cysteine 319, and cysteine 274–cysteine 321.

Homodimer; disulfide-linked. In the presence of Tl, crystal structures show one Tl molecule bound to a spaetzle C-106 homodimer. However, the active complex probably consists of two Tl molecules bound to a spaetzle C-106 homodimer. This is supported by in vitro experiments which also show binding of the spaetzle C-106 dimer to 2 Tl receptors. Ligand binding induces conformational changes in the extracellular domain of Tl. This may enable a secondary homodimerization interface at the C-terminus of the Tl extracellular domain. During embryonic development proteolytically processed by activated ea/easter; ea cleaves the signal peptide and also generates the C-terminal 12 kDa active ligand for the Toll receptor, C-106 (except for isoform 8.24 and isoform 11.27 as they do not contain the cleavage site). During the immune response, cleaved in the same manner by SPE. Post-translationally, extracellular forms of isoform 8.19 and isoform 11.7 are glycosylated.

Its subcellular location is the secreted. Its function is as follows. The activated form, spaetzle C-106, acts as a ligand for the Toll receptor. Binding to Toll activates the Toll signaling pathway and induces expression of the antifungal peptide drosomycin. Component of the extracellular signaling pathway that establishes dorsal-ventral polarity in the embryo. This is Protein spaetzle from Drosophila melanogaster (Fruit fly).